The sequence spans 163 residues: Large ribosomal subunit protein uL18 (163 aa).

This sequence belongs to the universal ribosomal protein uL18 family. In terms of assembly, part of the 50S ribosomal subunit. Contacts the 5S and 23S rRNAs.

Functionally, this is one of the proteins that bind and probably mediate the attachment of the 5S RNA into the large ribosomal subunit, where it forms part of the central protuberance. The protein is Large ribosomal subunit protein uL18 of Thermoplasma acidophilum (strain ATCC 25905 / DSM 1728 / JCM 9062 / NBRC 15155 / AMRC-C165).